The chain runs to 431 residues: BEL1-like homeodomain protein 5 (431 aa).

The tract at residues 80 to 96 (PIYLKAAQELLNEIVNV) is SR/KY domain. The segment at 128–199 (GVAALQMKKA…AVKDMISLQI (72 aa)) is BELL domain. Positions 228 to 290 (AWRPQRGLPE…NARVRMWKPL (63 aa)) form a DNA-binding region, homeobox. The segment covering 302 to 312 (EESRKGSDRYS) has biased composition (basic and acidic residues). Positions 302-333 (EESRKGSDRYSTKGSSSKQPYNNTTSNESSNT) are disordered. Residues 313 to 322 (TKGSSSKQPY) are compositionally biased toward polar residues. Positions 323-333 (NNTTSNESSNT) are enriched in low complexity.

Belongs to the TALE/BELL homeobox family. As to quaternary structure, may form heterodimeric complexes with TALE/KNOX proteins. Interacts with OFP1.

Its subcellular location is the nucleus. This chain is BEL1-like homeodomain protein 5 (BLH5), found in Arabidopsis thaliana (Mouse-ear cress).